Consider the following 393-residue polypeptide: F-box protein KIB4 (393 aa).

The region spanning 12 to 59 (AKQPILVLDLVRLVLERLSFVDFHRARCVSSVWYSASKSCIGGTNPTA) is the F-box domain.

It is found in the cytoplasm. The protein localises to the nucleus. The protein resides in the nucleolus. Its function is as follows. Component of SCF(ASK-cullin-F-box) E3 ubiquitin ligase complexes, which may mediate the ubiquitination and subsequent proteasomal degradation of target proteins. Required for brassinosteroid (BR) signal transduction. Mediates ASK7/BIN2/SK21 inactivation both by competing with substrate binding (e.g. BZR1) and by promoting its ubiquitination and subsequent proteasomal degradation. The protein is F-box protein KIB4 of Arabidopsis thaliana (Mouse-ear cress).